The primary structure comprises 386 residues: Vesicle-associated protein 2-2 (386 aa).

An N-acetylmethionine modification is found at methionine 1. Topologically, residues 1-363 are cytoplasmic; it reads MNMPLLDIQP…TKKIVKEVHN (363 aa). In terms of domain architecture, MSP spans 5–125; the sequence is LLDIQPRTLQ…EENKLRVTLV (121 aa). Serine 279 carries the post-translational modification Phosphoserine. The stretch at 300–353 forms a coiled coil; that stretch reads ELKLVKDIEEMKLKVDALESKLKQADSTISKLMEERSISSQHRQSLQHELAELR. The chain crosses the membrane as a helical; Anchor for type IV membrane protein span at residues 364–384; it reads GFPLLYVCVVAFIAYVIGHFL.

It belongs to the VAMP-associated protein (VAP) (TC 9.B.17) family. As to quaternary structure, interacts with cowpea mosaic virus (CPMV) NTP-binding protein (NTB).

It localises to the endoplasmic reticulum membrane. Functionally, may play a role in vesicle trafficking. This is Vesicle-associated protein 2-2 (PVA22) from Arabidopsis thaliana (Mouse-ear cress).